The chain runs to 233 residues: MKTECRELFAMTVILDIEGTVCPITFVKDTLFPYFLEQLHPILSSLQFPLDKADPVANICSQFPSHVQQDETSLITYIRQLVASDTKDPVLKSLQGLVWKKGYDNGDLVAPIYDDAIALITTSSEPIYIYSSGSVAAQKLLFSHVKGNLDLTPHLAGYFDITTSGHKQDSTSYKSILHAIGNPEPATVTFYSDSPAEVRAAIEAGMKATIVVRPGNGPLTDQDRQLGTITSFP.

Positions 16 and 18 each coordinate Mg(2+). Residues 131-132 (SS) and Lys-167 contribute to the substrate site. Asp-193 provides a ligand contact to Mg(2+).

It belongs to the HAD-like hydrolase superfamily. MasA/MtnC family. Monomer. Mg(2+) is required as a cofactor.

Its subcellular location is the cytoplasm. It is found in the nucleus. It carries out the reaction 5-methylsulfanyl-2,3-dioxopentyl phosphate + H2O = 1,2-dihydroxy-5-(methylsulfanyl)pent-1-en-3-one + phosphate. It participates in amino-acid biosynthesis; L-methionine biosynthesis via salvage pathway; L-methionine from S-methyl-5-thio-alpha-D-ribose 1-phosphate: step 3/6. It functions in the pathway amino-acid biosynthesis; L-methionine biosynthesis via salvage pathway; L-methionine from S-methyl-5-thio-alpha-D-ribose 1-phosphate: step 4/6. Its function is as follows. Bifunctional enzyme that catalyzes the enolization of 2,3-diketo-5-methylthiopentyl-1-phosphate (DK-MTP-1-P) into the intermediate 2-hydroxy-3-keto-5-methylthiopentenyl-1-phosphate (HK-MTPenyl-1-P), which is then dephosphorylated to form the acireductone 1,2-dihydroxy-3-keto-5-methylthiopentene (DHK-MTPene). This is Enolase-phosphatase E1 from Meyerozyma guilliermondii (strain ATCC 6260 / CBS 566 / DSM 6381 / JCM 1539 / NBRC 10279 / NRRL Y-324) (Yeast).